A 367-amino-acid polypeptide reads, in one-letter code: N-acetylmuramoyl-L-alanine amidase BlyA (367 aa).

Positions 24-158 (VKKCVLHYTA…DITHKNCPAP (135 aa)) constitute an N-acetylmuramoyl-L-alanine amidase domain. The interval 178-204 (SGKSVSKASPTKPTTSSPSSSSAVSGS) is disordered. A compositionally biased stretch (low complexity) spans 180–204 (KSVSKASPTKPTTSSPSSSSAVSGS). SH3b domains are found at residues 202 to 271 (SGSL…YVDV) and 298 to 367 (GKIK…GSTI).

Belongs to the N-acetylmuramoyl-L-alanine amidase 2 family.

Its subcellular location is the secreted. It carries out the reaction Hydrolyzes the link between N-acetylmuramoyl residues and L-amino acid residues in certain cell-wall glycopeptides.. In terms of biological role, autolysins are involved in some important biological processes such as cell separation, cell-wall turnover, competence for genetic transformation, formation of the flagella and sporulation. Involved in prophage SP-beta-mediated cell lysis. This Bacillus subtilis (strain 168) protein is N-acetylmuramoyl-L-alanine amidase BlyA (blyA).